Reading from the N-terminus, the 245-residue chain is Leucyl/phenylalanyl-tRNA--protein transferase (245 aa).

The protein belongs to the L/F-transferase family.

It localises to the cytoplasm. It catalyses the reaction N-terminal L-lysyl-[protein] + L-leucyl-tRNA(Leu) = N-terminal L-leucyl-L-lysyl-[protein] + tRNA(Leu) + H(+). It carries out the reaction N-terminal L-arginyl-[protein] + L-leucyl-tRNA(Leu) = N-terminal L-leucyl-L-arginyl-[protein] + tRNA(Leu) + H(+). The enzyme catalyses L-phenylalanyl-tRNA(Phe) + an N-terminal L-alpha-aminoacyl-[protein] = an N-terminal L-phenylalanyl-L-alpha-aminoacyl-[protein] + tRNA(Phe). Its function is as follows. Functions in the N-end rule pathway of protein degradation where it conjugates Leu, Phe and, less efficiently, Met from aminoacyl-tRNAs to the N-termini of proteins containing an N-terminal arginine or lysine. The protein is Leucyl/phenylalanyl-tRNA--protein transferase of Paraburkholderia phytofirmans (strain DSM 17436 / LMG 22146 / PsJN) (Burkholderia phytofirmans).